Reading from the N-terminus, the 58-residue chain is uncharacterized protein (58 aa).

This is an uncharacterized protein from Phaseolus vulgaris (Kidney bean).